A 478-amino-acid chain; its full sequence is Ninja-family protein 8 (478 aa).

Disordered stretches follow at residues 1–247 (MDDD…LTPG), 337–374 (FTAKDKADQTGTKQVDDGKKPQEAGASSSAHAEDEKKA), and 454–478 (DAPAQDNSATLPAFPAGNQATSAEN). Basic and acidic residues predominate over residues 23 to 35 (KARDAPLEPKAEP). Over residues 169–179 (ISISTDDGSTG) the composition is skewed to polar residues. Residues 180–189 (ENEDVAESEA) show a composition bias toward acidic residues. A compositionally biased stretch (low complexity) spans 233–242 (SFSGSESSSG). Residues 339–358 (AKDKADQTGTKQVDDGKKPQ) show a composition bias toward basic and acidic residues.

The protein belongs to the Ninja family.

It is found in the nucleus. This Zea mays (Maize) protein is Ninja-family protein 8.